The primary structure comprises 204 residues: Probable carboxysome shell protein CsoS1E (204 aa).

Low complexity-rich tracts occupy residues Met-1–Ser-14, Ser-41–Ser-84, and Gly-92–Ser-102. Positions Met-1–Ser-102 are disordered. The BMC domain occupies Ala-111–Arg-196.

Belongs to the bacterial microcompartments protein family. In terms of assembly, homohexamer.

It localises to the carboxysome. Its function is as follows. A probable carboxysomal shell protein found only in Prochlorococcus and Synechococcus strains that grow in low light. The chain is Probable carboxysome shell protein CsoS1E from Prochlorococcus marinus (strain MIT 9313).